The following is a 400-amino-acid chain: Phosphoglycerate kinase (400 aa).

Substrate-binding positions include 23 to 25, Arg38, 61 to 64, Arg120, and Arg153; these read DLN and HFGR. Residues Lys203, Glu325, and 355-358 each bind ATP; that span reads GGDT.

It belongs to the phosphoglycerate kinase family. As to quaternary structure, monomer.

It is found in the cytoplasm. The catalysed reaction is (2R)-3-phosphoglycerate + ATP = (2R)-3-phospho-glyceroyl phosphate + ADP. It functions in the pathway carbohydrate degradation; glycolysis; pyruvate from D-glyceraldehyde 3-phosphate: step 2/5. The protein is Phosphoglycerate kinase of Methylorubrum extorquens (strain PA1) (Methylobacterium extorquens).